A 392-amino-acid chain; its full sequence is Nicotinate phosphoribosyltransferase (392 aa).

His216 is modified (phosphohistidine; by autocatalysis).

This sequence belongs to the NAPRTase family. In terms of processing, transiently phosphorylated on a His residue during the reaction cycle. Phosphorylation strongly increases the affinity for substrates and increases the rate of nicotinate D-ribonucleotide production. Dephosphorylation regenerates the low-affinity form of the enzyme, leading to product release.

The catalysed reaction is nicotinate + 5-phospho-alpha-D-ribose 1-diphosphate + ATP + H2O = nicotinate beta-D-ribonucleotide + ADP + phosphate + diphosphate. It functions in the pathway cofactor biosynthesis; NAD(+) biosynthesis; nicotinate D-ribonucleotide from nicotinate: step 1/1. Its function is as follows. Catalyzes the synthesis of beta-nicotinate D-ribonucleotide from nicotinate and 5-phospho-D-ribose 1-phosphate at the expense of ATP. This Cupriavidus necator (strain ATCC 17699 / DSM 428 / KCTC 22496 / NCIMB 10442 / H16 / Stanier 337) (Ralstonia eutropha) protein is Nicotinate phosphoribosyltransferase.